The sequence spans 356 residues: Nitrilase, arylacetone-specific (356 aa).

The CN hydrolase domain maps to 7–280 (VRAAAVQAAS…EGLIIADLNM (274 aa)). The active-site Proton acceptor is E47. The active-site Proton donor is the K129. The active-site Nucleophile is C163. The segment at 324–356 (QEEAPEPHVQSTAAPVAVSQTQDSDTLLVQEPS) is disordered. Positions 332-356 (VQSTAAPVAVSQTQDSDTLLVQEPS) are enriched in polar residues.

This sequence belongs to the carbon-nitrogen hydrolase superfamily. Nitrilase family. Homohexamer.

The enzyme catalyses a nitrile + 2 H2O = a carboxylate + NH4(+). Its function is as follows. Nitrilase that acts mostly on arylacetonitriles. This chain is Nitrilase, arylacetone-specific, found in Alcaligenes faecalis.